The following is a 521-amino-acid chain: Cytochrome P450 1A1 (521 aa).

Phe229 provides a ligand contact to substrate. Cys463 serves as a coordination point for heme.

This sequence belongs to the cytochrome P450 family. Heme serves as cofactor.

It localises to the endoplasmic reticulum membrane. The protein resides in the microsome membrane. The catalysed reaction is an organic molecule + reduced [NADPH--hemoprotein reductase] + O2 = an alcohol + oxidized [NADPH--hemoprotein reductase] + H2O + H(+). Functionally, cytochromes P450 are a group of heme-thiolate monooxygenases. They oxidize a variety of structurally unrelated compounds, including steroids, fatty acids, and xenobiotics. This is Cytochrome P450 1A1 (cyp1a1) from Chelon saliens (Leaping mullet).